A 668-amino-acid chain; its full sequence is Potassium voltage-gated channel subfamily KQT member 1 (668 aa).

Residues 1–119 (MDTASSPPSA…YNFLERPTGW (119 aa)) lie on the Cytoplasmic side of the membrane. Ser-27 is subject to Phosphoserine; by PKA. The chain crosses the membrane as a helical span at residues 120–141 (KCFVYHFTVFLIVLVCLIFSVL). Over 142 to 152 (STIEQYAALAT) the chain is Extracellular. Residues 153-175 (GTLFWMEIVLVVFFGTEYVVRLW) traverse the membrane as a helical segment. Residues 176–191 (SAGCRSKYVGIWGRLR) lie on the Cytoplasmic side of the membrane. Residues 192-217 (FARKPISIIDLIVVVASMVVLCVGSK) form a helical membrane-spanning segment. Topologically, residues 218-225 (GQVFATSA) are extracellular. The chain crosses the membrane as a helical; Voltage-sensor span at residues 226–241 (IRGIRFLQILRMLHVD). Residues 237–245 (MLHVDRQGG) form an interaction with KCNE3 region. Residues 242-259 (RQGGTWRLLGSVVFIHRQ) are Cytoplasmic-facing. Gln-243 is an a 1,2-diacyl-sn-glycero-3-phospho-(1D-myo-inositol-4,5-bisphosphate) binding site. The helical transmembrane segment at 260-282 (ELITTLYIGFLGLIFSSYFVYLA) threads the bilayer. Residues 283 to 298 (EKDAVNESGRIEFGSY) lie on the Extracellular side of the membrane. Asn-288 carries N-linked (GlcNAc...) asparagine glycosylation. Residues 299–319 (ADALWWGVVTVTTIGYGDKVP) constitute an intramembrane region (pore-forming). Residues 320–321 (QT) lie on the Extracellular side of the membrane. Residues 322–347 (WVGKTIASCFSVFAISFFALPAGILG) form a helical membrane-spanning segment. Residues 348–668 (SGFALKVQQK…VPQTGPDEGS (321 aa)) lie on the Cytoplasmic side of the membrane. Residues 369–381 (AAASLIQTAWRCY) are interaction with CALM. A phosphoserine mark is found at Ser-406 and Ser-408. Residues 514–528 (KVIRRMQYFVAKKKF) are interaction with CALM; calcium-dependent. The interval 534-571 (PYDVRDVIEQYSQGHLNLMVRIKELQRRLDQSIGKPSL) is interaction with KCNE1 C-terminus. The stretch at 584–620 (SNTIGARLNRVEDKVTQLDQRLVIITDMLHQLLSMQQ) forms a coiled coil. An interaction with AKAP9 region spans residues 587–615 (IGARLNRVEDKVTQLDQRLVIITDMLHQL). Residues 588-619 (GARLNRVEDKVTQLDQRLVIITDMLHQLLSMQ) form a C-terminal assembly domain (tetramerization) region.

The protein belongs to the potassium channel family. KQT (TC 1.A.1.15) subfamily. Kv7.1/KCNQ1 sub-subfamily. As to quaternary structure, tetramer. Heterotetramer with KCNE1; form the native cardiac channel I(Ks) which increases the amplitude and slows down the activation kinetics of outward potassium current and targets to the membrane raft. Interacts (via C-terminus) with CALM; forms a heterooctameric structure (with 4:4 KCNQ1:CALM stoichiometry) in a calcium-independent manner. Interacts with AKAP9; targets protein kinase A (PKA) catalytic and regulatory subunits and protein phosphatase 1 (PP1) to the KCNQ1-KCNE1 complex, allowing PKA-mediated phosphorylation and increase of delayed rectifier potassium channel activity. Interacts with KCNE2; form an heterooligomer complex that targets to the membrane raft and leading to currents with an apparently instantaneous activation, a rapid deactivation process and a linear current-voltage relationship and decreases the amplitude of the outward current. Interacts with AP2M1; mediates estrogen-induced internalization via clathrin-coated vesicles. Interacts with NEDD4L; promotes internalization and decreases I(Ks) currents. Interacts with USP2; counteracts the NEDD4L-specific down-regulation of I(Ks) and restore plasma membrane localization. Heterotetramer with KCNQ5; has a voltage-gated potassium channel activity. Interacts with KCNE3; four KCNE3 molecules are bound to one KCNQ1 tetramer (4:4 KCNQ1:KCNE3 stoichiometry); alters membrane raft localization; affects KCNQ1 structure and gating properties. Interacts with KCNE4; impairs KCNQ1 localization in lipid rafts and inhibits voltage-gated potassium channel activity. Interacts with KCNE5; impairs KCNQ1 localization in lipid rafts and only conducts current upon strong and continued depolarization. Interacts with SLC5A3; forms coregulatory channel-transporter complexes that modulate Na(+)-coupled myo-inositol influx through the transporter. In terms of processing, phosphorylation at Ser-27 by PKA; increases delayed rectifier potassium channel activity of the KCNQ1-KCNE1 complex through a macromolecular complex that includes PKA, PP1, and the targeting protein AKAP9. Ubiquitinated by NEDD4L; promotes internalization. The ubiquitinylated form is internalized through a clathrin-mediated endocytosis by interacting with AP2M1 and is recycled back to the cell membrane via RAB4A and RAB11A. Post-translationally, deubiquitinated by USP2; counteracts the NEDD4L-specific down-regulation of I(Ks) and restores the membrane localization. As to expression, expressed in heart, kidney and salivary glands. Detected in the cochlea. Almost undetectable in brain, skeletal muscle and liver. Widely expressed in embryonic and neonatal tissues. Expressed in choroid plexus epithelium (at protein level).

The protein localises to the cell membrane. Its subcellular location is the cytoplasmic vesicle membrane. It is found in the early endosome. The protein resides in the membrane raft. It localises to the endoplasmic reticulum. The protein localises to the basolateral cell membrane. Its subcellular location is the apical cell membrane. The enzyme catalyses K(+)(in) = K(+)(out). Its activity is regulated as follows. PIP2 molecule is essential to activate KCNQ channels by inducing the coupling of the voltage-sensing domain (VSD) and the pore-forming domain (PD). Upon channel activation, PIP2 disrupts the VSD-calmodulin/CALM interactions, causing the release of CALM from the VSD which triggers the opening of the gate. Calcium potentiates KCNQ1 channel current through calcium-bound CALM. Calcium-bound CALM competes with PIP2 to stabilize the channel open state. In terms of biological role, pore-forming subunit of the voltage-gated potassium (Kv) channel involved in the regulation of cardiomyocyte excitability and important in normal development and functions of myocardium, inner ear, stomach and colon. Associates with KCNE beta subunits that modulates current kinetics. Induces a voltage-dependent by rapidly activating and slowly deactivating potassium-selective outward current. Also promotes a delayed voltage activated potassium current showing outward rectification characteristic. During beta-adrenergic receptor stimulation participates in cardiac increases the amplitude and slows down the activation kinetics of outward potassium current I(Ks). Muscarinic agonist oxotremorine-M strongly suppresses KCNQ1/KCNE1 current. When associated with KCNE3, forms the potassium channel that is important for cyclic AMP-stimulated intestinal secretion of chloride ions. This interaction with KCNE3 is reduced by 17beta-estradiol, resulting in the reduction of currents. During conditions of increased substrate load, maintains the driving force for proximal tubular and intestinal sodium ions absorption, gastric acid secretion, and cAMP-induced jejunal chloride ions secretion. Allows the provision of potassium ions to the luminal membrane of the secretory canaliculus in the resting state as well as during stimulated acid secretion. When associated with KCNE2, forms a heterooligomer complex leading to currents with an apparently instantaneous activation, a rapid deactivation process and a linear current-voltage relationship and decreases the amplitude of the outward current. When associated with KCNE4, inhibits voltage-gated potassium channel activity. When associated with KCNE5, this complex only conducts current upon strong and continued depolarization. Also forms a heterotetramer with KCNQ5; has a voltage-gated potassium channel activity. Binds with phosphatidylinositol 4,5-bisphosphate. KCNQ1-KCNE2 channel associates with Na(+)-coupled myo-inositol symporter in the apical membrane of choroid plexus epithelium and regulates the myo-inositol gradient between blood and cerebrospinal fluid with an impact on neuron excitability. This is Potassium voltage-gated channel subfamily KQT member 1 from Mus musculus (Mouse).